The sequence spans 406 residues: Peptidase T (406 aa).

H81 serves as a coordination point for Zn(2+). Residue D83 is part of the active site. Zn(2+) is bound at residue D142. Residue E176 is the Proton acceptor of the active site. Zn(2+)-binding residues include E177, D199, and H381.

Belongs to the peptidase M20B family. Requires Zn(2+) as cofactor.

Its subcellular location is the cytoplasm. The catalysed reaction is Release of the N-terminal residue from a tripeptide.. In terms of biological role, cleaves the N-terminal amino acid of tripeptides. The protein is Peptidase T of Streptococcus suis (strain 98HAH33).